Here is a 204-residue protein sequence, read N- to C-terminus: Leucyl/phenylalanyl-tRNA--protein transferase (204 aa).

This sequence belongs to the L/F-transferase family.

Its subcellular location is the cytoplasm. The enzyme catalyses N-terminal L-lysyl-[protein] + L-leucyl-tRNA(Leu) = N-terminal L-leucyl-L-lysyl-[protein] + tRNA(Leu) + H(+). It carries out the reaction N-terminal L-arginyl-[protein] + L-leucyl-tRNA(Leu) = N-terminal L-leucyl-L-arginyl-[protein] + tRNA(Leu) + H(+). The catalysed reaction is L-phenylalanyl-tRNA(Phe) + an N-terminal L-alpha-aminoacyl-[protein] = an N-terminal L-phenylalanyl-L-alpha-aminoacyl-[protein] + tRNA(Phe). Functions in the N-end rule pathway of protein degradation where it conjugates Leu, Phe and, less efficiently, Met from aminoacyl-tRNAs to the N-termini of proteins containing an N-terminal arginine or lysine. This is Leucyl/phenylalanyl-tRNA--protein transferase from Agrobacterium fabrum (strain C58 / ATCC 33970) (Agrobacterium tumefaciens (strain C58)).